Here is a 1111-residue protein sequence, read N- to C-terminus: Receptor-type guanylate cyclase gcy-7 (1111 aa).

The first 24 residues, 1-24 (MKPFYSMSLVLFLVITLLPKPMFP), serve as a signal peptide directing secretion. At 25 to 488 (QVATGTTGNV…CPKSFVDEYL (464 aa)) the chain is on the extracellular side. Residues Asn-80, Asn-300, Asn-326, Asn-353, Asn-389, Asn-407, Asn-430, and Asn-441 are each glycosylated (N-linked (GlcNAc...) asparagine). The chain crosses the membrane as a helical span at residues 489-509 (IWVIVAIVVLFLAITAAACGI). Residues 510-1111 (YFSIQARRQE…TLKSDEQLSD (602 aa)) are Cytoplasmic-facing. The Protein kinase domain maps to 536–838 (QINSKQKGKG…NDNLMDHVFN (303 aa)). Residues 542 to 550 (KGKGEHSVR) and Lys-568 contribute to the ATP site. In terms of domain architecture, Guanylate cyclase spans 896 to 1026 (TIFFSDVVQF…DAVNTASRME (131 aa)).

This sequence belongs to the adenylyl cyclase class-4/guanylyl cyclase family. Expressed asymmetrically in ASE left (ASEL) sensory neuron. Expressed in excretory canal cell.

The protein localises to the cell membrane. It carries out the reaction GTP = 3',5'-cyclic GMP + diphosphate. Its function is as follows. Guanylate cyclase involved in the production of the second messenger cGMP. Unlike other guanylate cyclases expressed in ASE neurons, may not play a role in chemotaxis responses toward salt ions in ASEL (ASE left) sensory neurons. In Caenorhabditis elegans, this protein is Receptor-type guanylate cyclase gcy-7.